Reading from the N-terminus, the 500-residue chain is Probable cytosol aminopeptidase (500 aa).

Mn(2+)-binding residues include K268 and D273. The active site involves K280. Mn(2+) is bound by residues D291, D350, and E352. The active site involves R354.

This sequence belongs to the peptidase M17 family. Mn(2+) serves as cofactor.

Its subcellular location is the cytoplasm. The catalysed reaction is Release of an N-terminal amino acid, Xaa-|-Yaa-, in which Xaa is preferably Leu, but may be other amino acids including Pro although not Arg or Lys, and Yaa may be Pro. Amino acid amides and methyl esters are also readily hydrolyzed, but rates on arylamides are exceedingly low.. It carries out the reaction Release of an N-terminal amino acid, preferentially leucine, but not glutamic or aspartic acids.. Its function is as follows. Presumably involved in the processing and regular turnover of intracellular proteins. Catalyzes the removal of unsubstituted N-terminal amino acids from various peptides. The chain is Probable cytosol aminopeptidase from Alkaliphilus metalliredigens (strain QYMF).